Here is a 286-residue protein sequence, read N- to C-terminus: MKERLFIISQYLLPHHLLSRLAGCIAECRVRWFKNAFTTWFAKRYQVDMSQALVEDVTAYEHFNAFFTRALKDGARPLDQTPGAILSPADGAISQLGPIEHGRIFQAKGHSFSVLELLGGDAANAAPFMGGEFATVYLSPKDYHRVHMPLAGTLREMVYIPGRIFSVNQTTAENVPELFARNERVACIFDTERGPMAVVLVGAMIVASIETVWAGLVTPPKRELKTFRYDEAARAPIHLEKGAELGRFKLGSTAIVLFGPDQVKWVEELKAGSPVQMGQALAQSNA.

Catalysis depends on charge relay system; for autoendoproteolytic cleavage activity residues D90, H147, and S252. The active-site Schiff-base intermediate with substrate; via pyruvic acid; for decarboxylase activity is S252. S252 carries the post-translational modification Pyruvic acid (Ser); by autocatalysis.

The protein belongs to the phosphatidylserine decarboxylase family. PSD-B subfamily. Prokaryotic type I sub-subfamily. In terms of assembly, heterodimer of a large membrane-associated beta subunit and a small pyruvoyl-containing alpha subunit. Requires pyruvate as cofactor. Post-translationally, is synthesized initially as an inactive proenzyme. Formation of the active enzyme involves a self-maturation process in which the active site pyruvoyl group is generated from an internal serine residue via an autocatalytic post-translational modification. Two non-identical subunits are generated from the proenzyme in this reaction, and the pyruvate is formed at the N-terminus of the alpha chain, which is derived from the carboxyl end of the proenzyme. The autoendoproteolytic cleavage occurs by a canonical serine protease mechanism, in which the side chain hydroxyl group of the serine supplies its oxygen atom to form the C-terminus of the beta chain, while the remainder of the serine residue undergoes an oxidative deamination to produce ammonia and the pyruvoyl prosthetic group on the alpha chain. During this reaction, the Ser that is part of the protease active site of the proenzyme becomes the pyruvoyl prosthetic group, which constitutes an essential element of the active site of the mature decarboxylase.

It localises to the cell membrane. It catalyses the reaction a 1,2-diacyl-sn-glycero-3-phospho-L-serine + H(+) = a 1,2-diacyl-sn-glycero-3-phosphoethanolamine + CO2. It functions in the pathway phospholipid metabolism; phosphatidylethanolamine biosynthesis; phosphatidylethanolamine from CDP-diacylglycerol: step 2/2. Its function is as follows. Catalyzes the formation of phosphatidylethanolamine (PtdEtn) from phosphatidylserine (PtdSer). This is Phosphatidylserine decarboxylase proenzyme from Pseudomonas fluorescens (strain Pf0-1).